The sequence spans 186 residues: uncharacterized protein (186 aa).

This is an uncharacterized protein from Caenorhabditis elegans.